We begin with the raw amino-acid sequence, 429 residues long: Adenylosuccinate synthetase (429 aa).

Residues 12–18 and 40–42 contribute to the GTP site; these read GDEGKGK and GHT. Residue Asp-13 is the Proton acceptor of the active site. Mg(2+) is bound by residues Asp-13 and Gly-40. IMP is bound by residues 13–16, 38–41, Thr-129, Arg-143, Gln-224, Thr-239, and Arg-303; these read DEGK and NAGH. His-41 acts as the Proton donor in catalysis. 299-305 is a substrate binding site; sequence VTTGRAR. GTP-binding positions include Arg-305, 331–333, and 413–415; these read KLD and GVG.

Belongs to the adenylosuccinate synthetase family. In terms of assembly, homodimer. It depends on Mg(2+) as a cofactor.

It localises to the cytoplasm. The catalysed reaction is IMP + L-aspartate + GTP = N(6)-(1,2-dicarboxyethyl)-AMP + GDP + phosphate + 2 H(+). The protein operates within purine metabolism; AMP biosynthesis via de novo pathway; AMP from IMP: step 1/2. In terms of biological role, plays an important role in the de novo pathway of purine nucleotide biosynthesis. Catalyzes the first committed step in the biosynthesis of AMP from IMP. The protein is Adenylosuccinate synthetase of Rhodococcus jostii (strain RHA1).